A 434-amino-acid chain; its full sequence is Probable phosphoglucosamine mutase (434 aa).

Catalysis depends on Ser-91, which acts as the Phosphoserine intermediate. Positions 91, 229, 231, and 233 each coordinate Mg(2+). Ser-91 is subject to Phosphoserine.

Belongs to the phosphohexose mutase family. Mg(2+) is required as a cofactor. Activated by phosphorylation.

It catalyses the reaction alpha-D-glucosamine 1-phosphate = D-glucosamine 6-phosphate. In terms of biological role, catalyzes the conversion of glucosamine-6-phosphate to glucosamine-1-phosphate. This Methanosarcina barkeri (strain Fusaro / DSM 804) protein is Probable phosphoglucosamine mutase.